Consider the following 445-residue polypeptide: Trigger factor (445 aa).

One can recognise a PPIase FKBP-type domain in the interval 172–257 (GDQVVIDFVG…VKSVNWAHMP (86 aa)).

The protein belongs to the FKBP-type PPIase family. Tig subfamily.

The protein resides in the cytoplasm. The catalysed reaction is [protein]-peptidylproline (omega=180) = [protein]-peptidylproline (omega=0). Its function is as follows. Involved in protein export. Acts as a chaperone by maintaining the newly synthesized protein in an open conformation. Functions as a peptidyl-prolyl cis-trans isomerase. This is Trigger factor from Polynucleobacter asymbioticus (strain DSM 18221 / CIP 109841 / QLW-P1DMWA-1) (Polynucleobacter necessarius subsp. asymbioticus).